The following is a 418-amino-acid chain: Serine hydroxymethyltransferase (418 aa).

(6S)-5,6,7,8-tetrahydrofolate contacts are provided by residues Leu121 and 125 to 127 (GHL). Lys230 carries the N6-(pyridoxal phosphate)lysine modification. 355-357 (SPF) contributes to the (6S)-5,6,7,8-tetrahydrofolate binding site.

The protein belongs to the SHMT family. In terms of assembly, homodimer. Pyridoxal 5'-phosphate serves as cofactor.

It localises to the cytoplasm. It catalyses the reaction (6R)-5,10-methylene-5,6,7,8-tetrahydrofolate + glycine + H2O = (6S)-5,6,7,8-tetrahydrofolate + L-serine. The protein operates within one-carbon metabolism; tetrahydrofolate interconversion. Its pathway is amino-acid biosynthesis; glycine biosynthesis; glycine from L-serine: step 1/1. Its function is as follows. Catalyzes the reversible interconversion of serine and glycine with tetrahydrofolate (THF) serving as the one-carbon carrier. This reaction serves as the major source of one-carbon groups required for the biosynthesis of purines, thymidylate, methionine, and other important biomolecules. Also exhibits THF-independent aldolase activity toward beta-hydroxyamino acids, producing glycine and aldehydes, via a retro-aldol mechanism. This is Serine hydroxymethyltransferase from Streptococcus pyogenes serotype M5 (strain Manfredo).